The chain runs to 588 residues: Calicin (588 aa).

The BTB domain maps to 12-124 (SFVLQNLNRQ…RLRVHCNDFL (113 aa)). The 103-residue stretch at 133–235 (CLRYLFLAEL…NAVSNKTLVF (103 aa)) folds into the BACK domain. Ser-149 carries the phosphoserine modification. Kelch repeat units follow at residues 280 to 327 (SVVI…SAGR), 328 to 375 (YIYI…TCGG), 377 to 423 (VYSV…TKGD), 425 to 475 (HLYI…SFQQ), 476 to 525 (DNIL…IGDS), and 526 to 580 (KVFV…LAKL).

In terms of assembly, interacts with CYLC1; the interaction may be relevant for proper acrosome attachment to the nuclear envelope. Expressed in testis, in spermatozoa (at protein level).

The protein localises to the cytoplasm. It localises to the cytoskeleton. The protein resides in the perinuclear theca. Its subcellular location is the calyx. Its function is as follows. Required for both nuclear and acrosomal shaping during spermiogenesis. This Homo sapiens (Human) protein is Calicin (CCIN).